A 307-amino-acid chain; its full sequence is Protein EI24 homolog (307 aa).

2 consecutive transmembrane segments (helical) span residues 53-73 and 92-112; these read FIHCIFLNGIIFLGTYLIYLY and MFTIIYFSLWVYPVYIFSIIA. The N-linked (GlcNAc...) asparagine glycan is linked to Asn135. 4 helical membrane passes run 153–173, 175–195, 225–245, and 260–280; these read LFGVILVMSAIIAFIPYTNFI, FVIITWLYSFWCFDYKWILRG, FFFPMLIGNAIFSILYPLFII, and GILPKQIPIFYVPEIIVNVIL.

Belongs to the EI24 family.

Its subcellular location is the membrane. The protein is Protein EI24 homolog of Dictyostelium discoideum (Social amoeba).